Consider the following 340-residue polypeptide: Lysophospholipase L2 (340 aa).

Its subcellular location is the cell inner membrane. It catalyses the reaction a 1-acyl-sn-glycero-3-phosphocholine + H2O = sn-glycerol 3-phosphocholine + a fatty acid + H(+). The chain is Lysophospholipase L2 (pldB) from Escherichia coli O6:H1 (strain CFT073 / ATCC 700928 / UPEC).